The chain runs to 100 residues: Nucleoid-associated protein HPSH_00175 (100 aa).

This sequence belongs to the YbaB/EbfC family. Homodimer.

It is found in the cytoplasm. Its subcellular location is the nucleoid. Functionally, binds to DNA and alters its conformation. May be involved in regulation of gene expression, nucleoid organization and DNA protection. The chain is Nucleoid-associated protein HPSH_00175 from Helicobacter pylori (strain Shi470).